The sequence spans 288 residues: Phosphatidylserine decarboxylase proenzyme (288 aa).

Residues D91, H148, and S254 each act as charge relay system; for autoendoproteolytic cleavage activity in the active site. S254 serves as the catalytic Schiff-base intermediate with substrate; via pyruvic acid; for decarboxylase activity. Residue S254 is modified to Pyruvic acid (Ser); by autocatalysis.

This sequence belongs to the phosphatidylserine decarboxylase family. PSD-B subfamily. Prokaryotic type I sub-subfamily. As to quaternary structure, heterodimer of a large membrane-associated beta subunit and a small pyruvoyl-containing alpha subunit. It depends on pyruvate as a cofactor. Is synthesized initially as an inactive proenzyme. Formation of the active enzyme involves a self-maturation process in which the active site pyruvoyl group is generated from an internal serine residue via an autocatalytic post-translational modification. Two non-identical subunits are generated from the proenzyme in this reaction, and the pyruvate is formed at the N-terminus of the alpha chain, which is derived from the carboxyl end of the proenzyme. The autoendoproteolytic cleavage occurs by a canonical serine protease mechanism, in which the side chain hydroxyl group of the serine supplies its oxygen atom to form the C-terminus of the beta chain, while the remainder of the serine residue undergoes an oxidative deamination to produce ammonia and the pyruvoyl prosthetic group on the alpha chain. During this reaction, the Ser that is part of the protease active site of the proenzyme becomes the pyruvoyl prosthetic group, which constitutes an essential element of the active site of the mature decarboxylase.

It localises to the cell membrane. It catalyses the reaction a 1,2-diacyl-sn-glycero-3-phospho-L-serine + H(+) = a 1,2-diacyl-sn-glycero-3-phosphoethanolamine + CO2. It participates in phospholipid metabolism; phosphatidylethanolamine biosynthesis; phosphatidylethanolamine from CDP-diacylglycerol: step 2/2. Its function is as follows. Catalyzes the formation of phosphatidylethanolamine (PtdEtn) from phosphatidylserine (PtdSer). The sequence is that of Phosphatidylserine decarboxylase proenzyme from Pseudoalteromonas translucida (strain TAC 125).